Here is a 468-residue protein sequence, read N- to C-terminus: GDNF family receptor alpha-1 (468 aa).

The N-terminal stretch at M1–G24 is a signal peptide. 3 tandem repeats follow at residues D25–N113, K150–R238, and E239–I342. Cysteines 36 and 42 form a disulfide. N59 carries an N-linked (GlcNAc...) asparagine glycan. 10 disulfides stabilise this stretch: C154-C214, C161-C167, C178-C192, C187-C233, C216-C221, C243-C313, C250-C256, C267-C285, C277-C337, and C315-C325. N347 and N406 each carry an N-linked (GlcNAc...) asparagine glycan. Residue S430 is the site of GPI-anchor amidated serine attachment. Positions H431–S468 are cleaved as a propeptide — removed in mature form.

The protein belongs to the GDNFR family. Interacts with GDNF ligand and RET: forms a 2:2:2 ternary complex composed of GDNF ligand, GFRA1 and RET receptor. Interacts with SORL1, either alone or in complex with GDNF. Interaction between SORL1 and GFRA1 leads to GFRA1 internalization, but not degradation. As to expression, expressed in the brain, in hippocampal neurons (at protein level). Isoform 1 and isoform 2 are expressed in heart, brain, lung, liver, kidney and testis.

It localises to the cell membrane. The protein localises to the golgi apparatus. The protein resides in the trans-Golgi network. It is found in the endosome. Its subcellular location is the multivesicular body. In terms of biological role, coreceptor for GDNF, a neurotrophic factor that enhances survival and morphological differentiation of dopaminergic neurons and increases their high-affinity dopamine uptake. GDNF-binding leads to autophosphorylation and activation of the RET receptor. The protein is GDNF family receptor alpha-1 (Gfra1) of Mus musculus (Mouse).